The chain runs to 89 residues: UPF0175 protein APE_0276a (89 aa).

This sequence belongs to the UPF0175 family.

The protein is UPF0175 protein APE_0276a of Aeropyrum pernix (strain ATCC 700893 / DSM 11879 / JCM 9820 / NBRC 100138 / K1).